Consider the following 1187-residue polypeptide: Carbamoyl phosphate synthase arginine-specific large chain, chloroplastic (1187 aa).

Residues 1–62 constitute a chloroplast transit peptide; the sequence is MRNHCLELSS…SSSFSTFPPC (62 aa). The interval 93-494 is carboxyphosphate synthetic domain; sequence GKRTDLKKIM…SFQKALRSLE (402 aa). The ATP site is built by Arg220, Arg261, Gly267, Gly268, Lys300, Leu302, Glu307, Gly333, Val334, His335, Gln377, and Glu391. Residues 224 to 420 form the ATP-grasp 1 domain; the sequence is KDAMKNIGLK…IAKMAAKLSV (197 aa). The Mg(2+) site is built by Gln377, Glu391, and Asn393. The tract at residues 495–644 is oligomerization domain; that stretch reads CGFSGWGCAK…YSSYDVECES (150 aa). The tract at residues 645–1040 is carbamoyl phosphate synthetic domain; that stretch reads APNNKKKVLI…SAFAMAQIAA (396 aa). Residues 782 to 975 enclose the ATP-grasp 2 domain; it reads NAILDELKIE…LAKYAALVMS (194 aa). Residues Arg818, Lys857, Leu859, Glu864, Gly890, Val891, His892, Ser893, Gln933, and Glu946 each contribute to the ATP site. Residues Gln933, Glu946, and Asn948 each contribute to the Mg(2+) site. The allosteric domain stretch occupies residues 1041–1187; sequence GQKLPLSGTV…EVKNVSSLLV (147 aa). The MGS-like domain occupies 1042–1183; that stretch reads QKLPLSGTVF…QDFFEVKNVS (142 aa).

Belongs to the CarB family. Heterodimer composed of 2 chains; the small (or glutamine) chain promotes the hydrolysis of glutamine to ammonia, which is used by the large (or ammonia) chain to synthesize carbamoyl phosphate. The cofactor is Mg(2+). Requires Mn(2+) as cofactor. As to expression, expressed in roots and leaves.

It is found in the plastid. The protein resides in the chloroplast. The enzyme catalyses hydrogencarbonate + L-glutamine + 2 ATP + H2O = carbamoyl phosphate + L-glutamate + 2 ADP + phosphate + 2 H(+). It catalyses the reaction hydrogencarbonate + NH4(+) + 2 ATP = carbamoyl phosphate + 2 ADP + phosphate + 2 H(+). Its pathway is amino-acid biosynthesis; L-arginine biosynthesis; carbamoyl phosphate from bicarbonate: step 1/1. Functionally, large subunit of the arginine-specific carbamoyl phosphate synthase (CPSase). CPSase catalyzes the formation of carbamoyl phosphate from the ammonia moiety of glutamine, hydrogencarbonate, and phosphate donated by ATP, constituting the first step of 2 biosynthetic pathways, one leading to arginine and/or urea and the other to pyrimidine nucleotides. The large subunit (synthetase) binds the substrates ammonia (free or transferred from glutamine from the small subunit), hydrogencarbonate and ATP and carries out an ATP-coupled ligase reaction, activating hydrogencarbonate by forming carboxy phosphate which reacts with ammonia to form carbamoyl phosphate. Required for mesophyll development. This Arabidopsis thaliana (Mouse-ear cress) protein is Carbamoyl phosphate synthase arginine-specific large chain, chloroplastic (CARB).